Consider the following 324-residue polypeptide: Phospho-N-acetylmuramoyl-pentapeptide-transferase (324 aa).

10 consecutive transmembrane segments (helical) span residues 9-29, 54-74, 77-97, 117-137, 147-167, 176-196, 201-221, 227-247, 253-273, and 304-324; these read TFAV…PFLV, MGAV…SFIG, VSAA…LGFL, FLGQ…SDFA, IEVD…VGFS, LDGL…VIAF, MDVA…LLFN, IFMG…VSIL, LLLL…LQVF, and VLTF…VVIF.

It belongs to the glycosyltransferase 4 family. MraY subfamily. It depends on Mg(2+) as a cofactor.

It localises to the cell membrane. It carries out the reaction UDP-N-acetyl-alpha-D-muramoyl-L-alanyl-gamma-D-glutamyl-meso-2,6-diaminopimeloyl-D-alanyl-D-alanine + di-trans,octa-cis-undecaprenyl phosphate = di-trans,octa-cis-undecaprenyl diphospho-N-acetyl-alpha-D-muramoyl-L-alanyl-D-glutamyl-meso-2,6-diaminopimeloyl-D-alanyl-D-alanine + UMP. It participates in cell wall biogenesis; peptidoglycan biosynthesis. Catalyzes the initial step of the lipid cycle reactions in the biosynthesis of the cell wall peptidoglycan: transfers peptidoglycan precursor phospho-MurNAc-pentapeptide from UDP-MurNAc-pentapeptide onto the lipid carrier undecaprenyl phosphate, yielding undecaprenyl-pyrophosphoryl-MurNAc-pentapeptide, known as lipid I. This Listeria welshimeri serovar 6b (strain ATCC 35897 / DSM 20650 / CCUG 15529 / CIP 8149 / NCTC 11857 / SLCC 5334 / V8) protein is Phospho-N-acetylmuramoyl-pentapeptide-transferase.